The primary structure comprises 803 residues: Ubiquitin carboxyl-terminal hydrolase 45 (803 aa).

The disordered stretch occupies residues 1-34; sequence MRLKDPFSLKTADMTKRSNKPKKPRDEDSSDEVG. A UBP-type zinc finger spans residues 36-153; that stretch reads LTCQHVSRAV…QTLDFLQKQS (118 aa). The Zn(2+) site is built by C38, H40, C62, C65, C85, C88, C93, H100, H104, H113, C126, and C129. The USP domain occupies 192–802; that stretch reads KGINNLGNTC…QAYLLFYEEL (611 aa). Residue C201 is the Nucleophile of the active site. The tract at residues 394–554 is disordered; the sequence is PTNPARLGKS…LPSIRPQQGG (161 aa). Residues 403 to 417 are compositionally biased toward basic and acidic residues; sequence SGREQDSLTSHDDSL. Composition is skewed to polar residues over residues 419–440 and 469–480; these read AHSQ…SRHS and SYRTDTMGSQSD. Residues 502 to 531 show a composition bias toward low complexity; the sequence is SEWSPRIPSVSSHSSTSDKTSITTTLSTTT. The segment covering 532 to 545 has biased composition (polar residues); that stretch reads HNPSLKSNPSSTPL. H739 functions as the Proton acceptor in the catalytic mechanism.

It belongs to the peptidase C19 family. As to expression, retina.

It is found in the photoreceptor inner segment. It localises to the cytoplasm. The protein localises to the nucleus. The enzyme catalyses Thiol-dependent hydrolysis of ester, thioester, amide, peptide and isopeptide bonds formed by the C-terminal Gly of ubiquitin (a 76-residue protein attached to proteins as an intracellular targeting signal).. Its function is as follows. Catalyzes the deubiquitination of SPDL1. Plays a role in the repair of UV-induced DNA damage via deubiquitination of ERCC1, promoting its recruitment to DNA damage sites. May be involved in the maintenance of photoreceptor function. May play a role in normal retinal development. The chain is Ubiquitin carboxyl-terminal hydrolase 45 from Danio rerio (Zebrafish).